The primary structure comprises 833 residues: Transmembrane protease serine 7 (833 aa).

Topologically, residues 1 to 62 are cytoplasmic; the sequence is MDKEKSDPSC…RAPFWNVQNK (62 aa). The disordered stretch occupies residues 30 to 49; the sequence is KLPGRRLPRKPIGKARPRKQ. The span at 32–49 shows a compositional bias: basic residues; the sequence is PGRRLPRKPIGKARPRKQ. A helical; Signal-anchor for type II membrane protein transmembrane segment spans residues 63-83; it reads IILFTVFLFILAVTAWTLLWL. Over 84-829 the chain is Extracellular; sequence YISKTDSKDA…NFVPWIHKYV (746 aa). Residues 92–220 enclose the SEA domain; it reads DAFYFVGMFR…DSVVLNAGLR (129 aa). N196 carries an N-linked (GlcNAc...) asparagine glycan. Disulfide bonds link C233–C259, C285–C312, and C355–C386. 2 CUB domains span residues 233–350 and 355–471; these read CSQY…FEVI and CENT…YNIS. N-linked (GlcNAc...) asparagine glycans are attached at residues N405 and N469. LDL-receptor class A domains follow at residues 473–509 and 548–585; these read PCPA…LFCV and PCTN…EGCG. Disulfide bonds link C474–C486, C481–C499, C493–C508, C549–C561, C556–C575, C569–C584, and C621–C637. The 235-residue stretch at 596 to 830 folds into the Peptidase S1 domain; that stretch reads VVGGSDSQEG…FVPWIHKYVP (235 aa). Residues H636 and D684 each act as charge relay system in the active site. 3 cysteine pairs are disulfide-bonded: C720–C786, C752–C765, and C776–C806. The active-site Charge relay system is S780.

This sequence belongs to the peptidase S1 family. In terms of assembly, forms a heterodimer with SERPINA5. N-glycosylated.

Its subcellular location is the cell membrane. Its function is as follows. Serine protease which preferentially hydrolyzes peptides with Arg at the P1 position. In Rattus norvegicus (Rat), this protein is Transmembrane protease serine 7.